The primary structure comprises 274 residues: Diaminopimelate epimerase (274 aa).

Positions 11, 44, and 64 each coordinate substrate. Cys-73 serves as the catalytic Proton donor. Substrate-binding positions include 74 to 75, Asn-157, Asn-190, and 208 to 209; these read GN and ER. The active-site Proton acceptor is Cys-217. Position 218 to 219 (218 to 219) interacts with substrate; sequence GS.

It belongs to the diaminopimelate epimerase family. Homodimer.

It is found in the cytoplasm. The catalysed reaction is (2S,6S)-2,6-diaminopimelate = meso-2,6-diaminopimelate. It functions in the pathway amino-acid biosynthesis; L-lysine biosynthesis via DAP pathway; DL-2,6-diaminopimelate from LL-2,6-diaminopimelate: step 1/1. Functionally, catalyzes the stereoinversion of LL-2,6-diaminopimelate (L,L-DAP) to meso-diaminopimelate (meso-DAP), a precursor of L-lysine and an essential component of the bacterial peptidoglycan. The protein is Diaminopimelate epimerase of Pasteurella multocida (strain Pm70).